Here is a 714-residue protein sequence, read N- to C-terminus: Fatty acid oxidation complex subunit alpha (714 aa).

Residues 1-190 (MEMASAFTLN…KLGLVDDVVP (190 aa)) form an enoyl-CoA hydratase region. The 3-hydroxyacyl-CoA dehydrogenase stretch occupies residues 306 to 714 (APLNSVGILG…FWKTTATDLQ (409 aa)).

In the N-terminal section; belongs to the enoyl-CoA hydratase/isomerase family. It in the central section; belongs to the 3-hydroxyacyl-CoA dehydrogenase family. In terms of assembly, heterotetramer of two alpha chains (FadJ) and two beta chains (FadI).

It is found in the cytoplasm. The catalysed reaction is a (3S)-3-hydroxyacyl-CoA = a (2E)-enoyl-CoA + H2O. It carries out the reaction a 4-saturated-(3S)-3-hydroxyacyl-CoA = a (3E)-enoyl-CoA + H2O. It catalyses the reaction a (3S)-3-hydroxyacyl-CoA + NAD(+) = a 3-oxoacyl-CoA + NADH + H(+). The enzyme catalyses (3S)-3-hydroxybutanoyl-CoA = (3R)-3-hydroxybutanoyl-CoA. It functions in the pathway lipid metabolism; fatty acid beta-oxidation. Functionally, catalyzes the formation of a hydroxyacyl-CoA by addition of water on enoyl-CoA. Also exhibits 3-hydroxyacyl-CoA epimerase and 3-hydroxyacyl-CoA dehydrogenase activities. The chain is Fatty acid oxidation complex subunit alpha from Escherichia coli O7:K1 (strain IAI39 / ExPEC).